A 242-amino-acid chain; its full sequence is ATP-dependent dethiobiotin synthetase BioD (242 aa).

15-20 (DVGKTV) serves as a coordination point for ATP. Residue Thr19 coordinates Mg(2+). Lys40 is an active-site residue. Residue Ser44 coordinates substrate. Glu117 is a binding site for Mg(2+). ATP contacts are provided by residues 117-120 (EGAG), 178-179 (NQ), and 208-210 (PYS).

This sequence belongs to the dethiobiotin synthetase family. As to quaternary structure, homodimer. Mg(2+) serves as cofactor.

The protein resides in the cytoplasm. The enzyme catalyses (7R,8S)-7,8-diammoniononanoate + CO2 + ATP = (4R,5S)-dethiobiotin + ADP + phosphate + 3 H(+). Its pathway is cofactor biosynthesis; biotin biosynthesis; biotin from 7,8-diaminononanoate: step 1/2. In terms of biological role, catalyzes a mechanistically unusual reaction, the ATP-dependent insertion of CO2 between the N7 and N8 nitrogen atoms of 7,8-diaminopelargonic acid (DAPA, also called 7,8-diammoniononanoate) to form a ureido ring. This is ATP-dependent dethiobiotin synthetase BioD from Halalkalibacterium halodurans (strain ATCC BAA-125 / DSM 18197 / FERM 7344 / JCM 9153 / C-125) (Bacillus halodurans).